Consider the following 473-residue polypeptide: ATP synthase subunit beta (473 aa).

Residue 158 to 165 (GGAGVGKT) participates in ATP binding.

This sequence belongs to the ATPase alpha/beta chains family. F-type ATPases have 2 components, CF(1) - the catalytic core - and CF(0) - the membrane proton channel. CF(1) has five subunits: alpha(3), beta(3), gamma(1), delta(1), epsilon(1). CF(0) has three main subunits: a(1), b(2) and c(9-12). The alpha and beta chains form an alternating ring which encloses part of the gamma chain. CF(1) is attached to CF(0) by a central stalk formed by the gamma and epsilon chains, while a peripheral stalk is formed by the delta and b chains.

It is found in the cell membrane. It catalyses the reaction ATP + H2O + 4 H(+)(in) = ADP + phosphate + 5 H(+)(out). In terms of biological role, produces ATP from ADP in the presence of a proton gradient across the membrane. The catalytic sites are hosted primarily by the beta subunits. The chain is ATP synthase subunit beta from Geobacillus kaustophilus (strain HTA426).